The primary structure comprises 479 residues: 6-phosphogluconate dehydrogenase, decarboxylating (479 aa).

NADP(+)-binding positions include 9–14 (GLGVMG), 32–34 (NRT), 77–79 (VQA), and Asn-105. Substrate is bound by residues Asn-105 and 131–133 (SGG). Lys-186 acts as the Proton acceptor in catalysis. 189-190 (HN) contributes to the substrate binding site. Glu-193 functions as the Proton donor in the catalytic mechanism. 5 residues coordinate substrate: Tyr-194, Lys-263, Arg-290, Arg-454, and His-460.

Belongs to the 6-phosphogluconate dehydrogenase family. In terms of assembly, homodimer.

The catalysed reaction is 6-phospho-D-gluconate + NADP(+) = D-ribulose 5-phosphate + CO2 + NADPH. It participates in carbohydrate degradation; pentose phosphate pathway; D-ribulose 5-phosphate from D-glucose 6-phosphate (oxidative stage): step 3/3. Its function is as follows. Catalyzes the oxidative decarboxylation of 6-phosphogluconate to ribulose 5-phosphate and CO(2), with concomitant reduction of NADP to NADPH. The polypeptide is 6-phosphogluconate dehydrogenase, decarboxylating (GND) (Trypanosoma brucei brucei).